We begin with the raw amino-acid sequence, 497 residues long: Bifunctional protein GlmU (497 aa).

Positions 1 to 252 are pyrophosphorylase; the sequence is MSQPSARPSA…VWEVEGANDR (252 aa). UDP-N-acetyl-alpha-D-glucosamine-binding positions include 14–17, K28, Q86, 91–92, 115–117, G154, E169, N192, and N250; these read LAAG, GT, and YGD. A Mg(2+)-binding site is contributed by D117. N250 provides a ligand contact to Mg(2+). The linker stretch occupies residues 253–273; it reads RQLSDLGRRLNERVLRHWMKE. Residues 274 to 497 form an N-acetyltransferase region; that stretch reads GVTVVDPSST…AGAEGSGAQG (224 aa). 2 residues coordinate UDP-N-acetyl-alpha-D-glucosamine: R355 and K373. H385 functions as the Proton acceptor in the catalytic mechanism. Y388 and N399 together coordinate UDP-N-acetyl-alpha-D-glucosamine. Acetyl-CoA contacts are provided by residues 408–409, S427, and A445; that span reads NY. The interval 473–497 is disordered; that stretch reads PAKRPGTSSAEAARAAGAEGSGAQG. Low complexity predominate over residues 480 to 490; sequence SSAEAARAAGA.

The protein in the N-terminal section; belongs to the N-acetylglucosamine-1-phosphate uridyltransferase family. In the C-terminal section; belongs to the transferase hexapeptide repeat family. Homotrimer. The cofactor is Mg(2+).

Its subcellular location is the cytoplasm. It carries out the reaction alpha-D-glucosamine 1-phosphate + acetyl-CoA = N-acetyl-alpha-D-glucosamine 1-phosphate + CoA + H(+). It catalyses the reaction N-acetyl-alpha-D-glucosamine 1-phosphate + UTP + H(+) = UDP-N-acetyl-alpha-D-glucosamine + diphosphate. It functions in the pathway nucleotide-sugar biosynthesis; UDP-N-acetyl-alpha-D-glucosamine biosynthesis; N-acetyl-alpha-D-glucosamine 1-phosphate from alpha-D-glucosamine 6-phosphate (route II): step 2/2. The protein operates within nucleotide-sugar biosynthesis; UDP-N-acetyl-alpha-D-glucosamine biosynthesis; UDP-N-acetyl-alpha-D-glucosamine from N-acetyl-alpha-D-glucosamine 1-phosphate: step 1/1. It participates in bacterial outer membrane biogenesis; LPS lipid A biosynthesis. Functionally, catalyzes the last two sequential reactions in the de novo biosynthetic pathway for UDP-N-acetylglucosamine (UDP-GlcNAc). The C-terminal domain catalyzes the transfer of acetyl group from acetyl coenzyme A to glucosamine-1-phosphate (GlcN-1-P) to produce N-acetylglucosamine-1-phosphate (GlcNAc-1-P), which is converted into UDP-GlcNAc by the transfer of uridine 5-monophosphate (from uridine 5-triphosphate), a reaction catalyzed by the N-terminal domain. This chain is Bifunctional protein GlmU, found in Micrococcus luteus (strain ATCC 4698 / DSM 20030 / JCM 1464 / CCM 169 / CCUG 5858 / IAM 1056 / NBRC 3333 / NCIMB 9278 / NCTC 2665 / VKM Ac-2230) (Micrococcus lysodeikticus).